The following is a 458-amino-acid chain: Transcription termination factor Rho (458 aa).

Positions 1–23 are disordered; sequence MNTTNKESTAELNNTESNNNYNN. The span at 10–23 shows a compositional bias: low complexity; the sequence is AELNNTESNNNYNN. The Rho RNA-BD domain occupies 78–153; that stretch reads LIVGEGVLEV…LKVNRVNFED (76 aa). Residues 201–206, 213–218, and Arg-244 each bind ATP; these read GKGQRA and RTGKTV.

The protein belongs to the Rho family. Homohexamer. The homohexamer assembles into an open ring structure.

In terms of biological role, facilitates transcription termination by a mechanism that involves Rho binding to the nascent RNA, activation of Rho's RNA-dependent ATPase activity, and release of the mRNA from the DNA template. The sequence is that of Transcription termination factor Rho from Rickettsia conorii (strain ATCC VR-613 / Malish 7).